A 983-amino-acid chain; its full sequence is Inner tegument protein (983 aa).

The interval 474–983 (LNVNTHFAVQ…TSVSLPPASP (510 aa)) is interaction with large tegument protein. The interval 902-932 (PWESAPQPPRLRMTPDTDHEESTAGATSVPE) is disordered. Positions 914-923 (MTPDTDHEES) are enriched in basic and acidic residues.

This sequence belongs to the herpesviridae inner tegument protein family. In terms of assembly, interacts (via C-terminus) with the large tegument protein/LTP (via N-terminus).

The protein resides in the virion tegument. The protein localises to the host cytoplasm. It is found in the host nucleus. Its subcellular location is the host Golgi apparatus. It localises to the host trans-Golgi network. Plays an essential role in cytoplasmic secondary envelopment during viral egress. Interacts with the capsid via the large tegument protein/LTP and participates in its transport to the host trans-Golgi network (TGN) where secondary envelopment occurs. Modulates tegumentation and capsid accumulation at the viral assembly complex. This chain is Inner tegument protein (UL47), found in Homo sapiens (Human).